We begin with the raw amino-acid sequence, 270 residues long: MQLIEVSAKTGYVWFRQGIWLFRRNPLAFVTLFFTYLLAMMLVSLVPVIGAALPLLLIPGIAVGFMAACRDTIAGKQVLPTILIDGFRSYGPIVTQRLLTLGGLYIVSMAAVFACSALGDGGTLLKIMFGLGAENLGPDALESPGFKIAALIAAALYAPVAMMFWFAPVLTAWHDVPPVKALFFSVVSCWRNKGAFTVYGLLWFALALGVSFGLAALMQALGASAYALMVMMPASIVITAMLYCSFYATYRGCFGVQEPGAPKLPNTSDR.

The next 6 membrane-spanning stretches (helical) occupy residues 24-44 (RNPLAFVTLFFTYLLAMMLVS), 45-65 (LVPVIGAALPLLLIPGIAVGF), 98-118 (LLTLGGLYIVSMAAVFACSAL), 150-170 (ALIAAALYAPVAMMFWFAPVL), 198-218 (VYGLLWFALALGVSFGLAALM), and 226-246 (YALMVMMPASIVITAMLYCSF).

It localises to the cell inner membrane. Its function is as follows. (Microbial infection) Probably transports the toxic C-terminal region of CdiA-2 from B.pseudomallei strain 1026b across the inner membrane to the cytoplasm, where CdiA has a toxic effect. Expression in E.coli makes the bacteria sensitive to the tRNase domain of B.pseudomallei strain 1026b CdiA-2. The sequence is that of Probable inner membrane protein BTH_II0599 from Burkholderia thailandensis (strain ATCC 700388 / DSM 13276 / CCUG 48851 / CIP 106301 / E264).